A 218-amino-acid chain; its full sequence is Elongation factor Ts (218 aa).

The tract at residues 82–85 (TDFV) is involved in Mg(2+) ion dislocation from EF-Tu.

Belongs to the EF-Ts family.

The protein localises to the cytoplasm. Its function is as follows. Associates with the EF-Tu.GDP complex and induces the exchange of GDP to GTP. It remains bound to the aminoacyl-tRNA.EF-Tu.GTP complex up to the GTP hydrolysis stage on the ribosome. The polypeptide is Elongation factor Ts (Prochlorococcus marinus (strain MIT 9215)).